The chain runs to 277 residues: MGRITQHLQVPRVVSTETKVFVNTRPDTIAVEEPLEIRVNGTNLTTTMRTPGHDIELVHGLLLAEGLIRDASEVSTARYCAGAVGPDNQNTYNVLELDVVPANPRRELNLVSVQRNLPTSSACGVCGTTSIEQLMDKKGWPIEPITPDPRMIITLPEKLRERQKMFDKTGGVHAAGLATLDGELLVVREDVGRHNAADKVIGHMLMNGRLPLRDTILVMSSRASFELVQKAAMAGIPGVIAVGAATSLAVDTARDAGMFLAGFVRGNKFNHYAGELG.

Catalysis depends on Cys-123, which acts as the Cysteine persulfide intermediate. 263 to 268 (FVRGNK) provides a ligand contact to Mo-bis(molybdopterin guanine dinucleotide).

This sequence belongs to the FdhD family.

Its subcellular location is the cytoplasm. Required for formate dehydrogenase (FDH) activity. Acts as a sulfur carrier protein that transfers sulfur from IscS to the molybdenum cofactor prior to its insertion into FDH. The chain is Sulfur carrier protein FdhD from Corynebacterium efficiens (strain DSM 44549 / YS-314 / AJ 12310 / JCM 11189 / NBRC 100395).